The chain runs to 198 residues: Glycerol-3-phosphate acyltransferase (198 aa).

3 helical membrane-spanning segments follow: residues 5 to 25 (AVILVIGLSYLVGSVPTGYLI), 114 to 134 (VLIMLPPVALATAAAVWIAVL), and 154 to 176 (AFALGGVGWRHVLFGLFLALVAV).

This sequence belongs to the PlsY family. In terms of assembly, probably interacts with PlsX.

It is found in the cell membrane. It carries out the reaction an acyl phosphate + sn-glycerol 3-phosphate = a 1-acyl-sn-glycero-3-phosphate + phosphate. It functions in the pathway lipid metabolism; phospholipid metabolism. Catalyzes the transfer of an acyl group from acyl-phosphate (acyl-PO(4)) to glycerol-3-phosphate (G3P) to form lysophosphatidic acid (LPA). This enzyme utilizes acyl-phosphate as fatty acyl donor, but not acyl-CoA or acyl-ACP. This Desulforudis audaxviator (strain MP104C) protein is Glycerol-3-phosphate acyltransferase.